We begin with the raw amino-acid sequence, 457 residues long: Peptidyl-prolyl cis-trans isomerase FKBP5 (457 aa).

Met1 is subject to N-acetylmethionine. Residues 1 to 26 (MTTDEGAKNSRGNPAATVAEQGEDVT) are disordered. The residue at position 28 (Lys28) is an N6-acetyllysine. PPIase FKBP-type domains lie at 50 to 138 (GDRV…LDFK) and 165 to 251 (GARV…KSFE). TPR repeat units follow at residues 268–301 (AAIVKEKGTVYFKGGKYVQAVIQYGKIVSWLEME), 317–350 (LAAFLNLAMCYLKLREYTKAVECCDKALGLDSAN), and 351–384 (EKGLYRRGEAQLLMNEFESAKGDFEKVLEVNPQN). A disordered region spans residues 421–457 (AKEEANKAMSKKTSEGVTNEKLTASHAVEEEKPEGHV). Ser445 is subject to Phosphoserine. A compositionally biased stretch (basic and acidic residues) spans 447–457 (AVEEEKPEGHV).

As to quaternary structure, part of a heteromultimeric cytoplasmic complex with HSP90AA1, HSPA1A/HSPA1B and steroid receptors. Upon ligand binding dissociates from the complex and FKBP4 takes its place. Interacts with functionally mature heterooligomeric progesterone receptor complexes along with HSP90 and TEBP. Interacts with NR3C1. Interacts with Akt/AKT1 and PHLPP1; enhancing dephosphorylation and subsequent activation of Akt/AKT1. Interacts with IFI44L; this interaction modulates the kinase activity of IKBKB and IKBKE. Interacts with IKBKB and IKBKE. Acetylation impairs ability to promote interaction between Akt/AKT1 and PHLPP1. Deacetylation by SIRT7 promotes interaction between Akt/AKT1 and PHLPP1, leading to suppress Akt/AKT1 activation. Post-translationally, ubiquitinated, leading to degradation in a proteasome-dependent manner. Deubiquitinated by USP49, leading to stabilization.

Its subcellular location is the cytoplasm. The protein localises to the nucleus. The enzyme catalyses [protein]-peptidylproline (omega=180) = [protein]-peptidylproline (omega=0). Its activity is regulated as follows. Inhibited by both FK506 and rapamycin. Immunophilin protein with PPIase and co-chaperone activities. Component of unligated steroid receptors heterocomplexes through interaction with heat-shock protein 90 (HSP90). Plays a role in the intracellular trafficking of heterooligomeric forms of steroid hormone receptors maintaining the complex into the cytoplasm when unliganded. Acts as a regulator of Akt/AKT1 activity by promoting the interaction between Akt/AKT1 and PHLPP1, thereby enhancing dephosphorylation and subsequent activation of Akt/AKT1. Interacts with IKBKE and IKBKB which facilitates IKK complex assembly leading to increased IKBKE and IKBKB kinase activity, NF-kappaB activation, and IFN production. This chain is Peptidyl-prolyl cis-trans isomerase FKBP5 (FKBP5), found in Saimiri boliviensis boliviensis (Bolivian squirrel monkey).